The primary structure comprises 223 residues: Golgi to ER traffic protein 1 (223 aa).

Residue M1 is a topological domain, lumenal. A helical membrane pass occupies residues 2 to 21 (SWVVAIAVVFVVVLKVLEYS). At 22–105 (TSYHDLVLQS…QIKGHLKKVK (84 aa)) the chain is on the cytoplasmic side. The stretch at 56–105 (ENKSISAQDNYAKWTKNNRKLDKLDKEITELGAQLKAHNEQIKGHLKKVK) forms a coiled coil. Residues 106-126 (LLLLTVPFLCFKLWKGKHIVY) traverse the membrane as a helical segment. The Lumenal portion of the chain corresponds to 127 to 177 (NLPHHQMFPQLVAGVWSQGWLYLAILPLQLAKSIVTGSSFAIETASFPHMG). Residues 178-194 (VSLGIWLWALNSVISNI) form a helical membrane-spanning segment. Topologically, residues 195–223 (EFMTMQLWAKPVSKPSKKLEIVTDEIKVD) are cytoplasmic.

Belongs to the WRB/GET1 family. Component of the Golgi to ER traffic (GET) complex, which is composed of GET1, GET2 and GET3. Within the complex, GET1 and GET2 form a heterotetramer which is stabilized by phosphatidylinositol binding and which binds to the GET3 homodimer.

The protein localises to the endoplasmic reticulum membrane. It localises to the golgi apparatus membrane. Its function is as follows. Required for the post-translational delivery of tail-anchored (TA) proteins to the endoplasmic reticulum. Together with GET2, acts as a membrane receptor for soluble GET3, which recognizes and selectively binds the transmembrane domain of TA proteins in the cytosol. The GET complex cooperates with the HDEL receptor ERD2 to mediate the ATP-dependent retrieval of resident ER proteins that contain a C-terminal H-D-E-L retention signal from the Golgi to the ER. The chain is Golgi to ER traffic protein 1 from Candida glabrata (strain ATCC 2001 / BCRC 20586 / JCM 3761 / NBRC 0622 / NRRL Y-65 / CBS 138) (Yeast).